We begin with the raw amino-acid sequence, 1537 residues long: Flocculation protein FLO1 (1537 aa).

The signal sequence occupies residues 1–24; sequence MTMPHRYMFLAVFTLLALTSVASG. Positions 74–249 constitute a PA14 domain; sequence GGQTDISIDY…GTTVSDDFEG (176 aa). Residues asparagine 135 and asparagine 187 are each glycosylated (N-linked (GlcNAc...) asparagine). Positions 197-240 are sugar recognition; it reads GGSLPPNIEGTVYMYAGYYYPMKVVYSNAVSWGTLPISVTLPDG. Asparagine 262 carries an N-linked (GlcNAc...) asparagine glycan. A run of 18 repeats spans residues 278–322, 323–367, 368–412, 413–457, 458–502, 503–547, 548–592, 593–637, 638–682, 683–727, 728–772, 773–817, 818–862, 863–907, 908–952, 953–997, 998–1042, and 1043–1087. Residues 278–1087 are 18 X 45 AA approximate tandem repeats, Thr-rich; sequence TTTEPWTGTF…KTPTTAISSS (810 aa). N-linked (GlcNAc...) asparagine glycosylation is found at asparagine 329, asparagine 374, asparagine 419, asparagine 464, asparagine 509, asparagine 554, asparagine 599, asparagine 644, asparagine 689, and asparagine 734. Disordered stretches follow at residues 770–799 and 860–889; these read LISTTTEPWTGTFTSTSTEMTTVTGTNGQP and LISTTTEPWTGTFTSTSTEMTTITGTNGQP. Positions 773 to 795 are enriched in low complexity; sequence TTTEPWTGTFTSTSTEMTTVTGT. A compositionally biased stretch (low complexity) spans 863–885; that stretch reads TTTEPWTGTFTSTSTEMTTITGT. The interval 995–1024 is disordered; it reads LISTTTEPWTGTFTSTSTEMTTVTGTNGQP. Residues 998–1020 show a composition bias toward low complexity; it reads TTTEPWTGTFTSTSTEMTTVTGT. Residue asparagine 1114 is glycosylated (N-linked (GlcNAc...) asparagine). A run of 2 repeats spans residues 1118 to 1137 and 1138 to 1157. The segment at 1118–1157 is 2 X 20 AA approximate tandem repeats, Ser/Thr-rich; sequence VISSSVISSSVTSSLFTSSPVISSSVISSSTTTSTSIFSE. Residues 1161–1220 are compositionally biased toward low complexity; that stretch reads SSVIPTSSSTSGSSESETSSAGSVSSSSFISSESSKSPTYSSSSLPLVTSATTSQETASS. Residues 1161–1232 are disordered; that stretch reads SSVIPTSSST…PATTTKTSEQ (72 aa). Polar residues predominate over residues 1222 to 1232; sequence PPATTTKTSEQ. A run of 6 repeats spans residues 1226-1276, 1291-1341, 1342-1392, 1408-1416, 1417-1425, and 1426-1434. A 3 X 51 AA approximate repeats, Ser/Thr-rich region spans residues 1226–1392; sequence TTKTSEQTTL…TVYPTWRPQT (167 aa). Over residues 1392 to 1404 the composition is skewed to polar residues; sequence TANEESVSSKMNS. The segment at 1392–1414 is disordered; it reads TANEESVSSKMNSATGETTTNTL. Residues 1405 to 1414 show a composition bias toward low complexity; the sequence is ATGETTTNTL. The interval 1408–1434 is 3 X 9 AA approximate tandem repeats, Thr-rich; sequence ETTTNTLAAETTTNTVAAETITNTGAA. The interval 1468-1497 is disordered; that stretch reads VSVSETGNTKSLTSSGLSTMSQQPRSTPAS. The span at 1472-1497 shows a compositional bias: polar residues; sequence ETGNTKSLTSSGLSTMSQQPRSTPAS. The GPI-anchor amidated glycine moiety is linked to residue glycine 1514. The propeptide at 1515–1537 is removed in mature form; sequence SANSLLAGSGLSVFIASLLLAII.

This sequence belongs to the flocculin family. In terms of processing, extensively N- and O-glycosylated. The GPI-anchor is attached to the protein in the endoplasmic reticulum and serves to target the protein to the cell surface. There, the glucosamine-inositol phospholipid moiety is cleaved off and the GPI-modified mannoprotein is covalently attached via its lipidless GPI glycan remnant to the 1,6-beta-glucan of the outer cell wall layer.

It is found in the cell membrane. Its subcellular location is the secreted. The protein resides in the cell wall. Functionally, cell wall protein that participates directly in adhesive cell-cell interactions during yeast flocculation, a reversible, asexual and Ca(2+)-dependent process in which cells adhere to form aggregates (flocs) consisting of thousands of cells. The lectin-like protein sticks out of the cell wall of flocculent cells and selectively binds mannose residues in the cell walls of adjacent cells. Activity is inhibited by mannose, but not by glucose, maltose, sucrose or galactose. Also involved in cell-substrate adhesion. This chain is Flocculation protein FLO1 (FLO1), found in Saccharomyces cerevisiae (strain ATCC 204508 / S288c) (Baker's yeast).